The primary structure comprises 484 residues: Chromosomal replication initiator protein DnaA (484 aa).

Residues 1–74 (MEKSKNIWSL…ILTKNGYNNV (74 aa)) are domain I, interacts with DnaA modulators. Residues 74–139 (VTIVFTNQPP…EEEPTNFKNP (66 aa)) form a domain II region. A domain III, AAA+ region region spans residues 140–356 (FLKKRYTFEN…AAVTKLKAYI (217 aa)). ATP-binding residues include Gly184, Gly186, Lys187, and Thr188. Positions 357 to 484 (DLDNIEIDID…TELMNKIKKN (128 aa)) are domain IV, binds dsDNA.

It belongs to the DnaA family. Oligomerizes as a right-handed, spiral filament on DNA at oriC.

The protein resides in the cytoplasm. Its function is as follows. Plays an essential role in the initiation and regulation of chromosomal replication. ATP-DnaA binds to the origin of replication (oriC) to initiate formation of the DNA replication initiation complex once per cell cycle. Binds the DnaA box (a 9 base pair repeat at the origin) and separates the double-stranded (ds)DNA. Forms a right-handed helical filament on oriC DNA; dsDNA binds to the exterior of the filament while single-stranded (ss)DNA is stabiized in the filament's interior. The ATP-DnaA-oriC complex binds and stabilizes one strand of the AT-rich DNA unwinding element (DUE), permitting loading of DNA polymerase. After initiation quickly degrades to an ADP-DnaA complex that is not apt for DNA replication. Binds acidic phospholipids. The protein is Chromosomal replication initiator protein DnaA of Borrelia garinii subsp. bavariensis (strain ATCC BAA-2496 / DSM 23469 / PBi) (Borreliella bavariensis).